A 224-amino-acid chain; its full sequence is Peroxiredoxin-6 (224 aa).

Positions 5-169 (LLLGDVAPNF…ILRVVISLQL (165 aa)) constitute a Thioredoxin domain. Residues 31 to 40 (DSWGILFSHP) are required and sufficient for targeting to lysosomes and lamellar bodies. Thr44 carries the phosphothreonine modification. Cys47 acts as the Cysteine sulfenic acid (-SOH) intermediate; for peroxidase activity in catalysis. The residue at position 63 (Lys63) is an N6-acetyllysine. A Phosphotyrosine modification is found at Tyr89. Catalysis depends on Asp140, which acts as the For phospholipase activity. Thr177 is modified (phosphothreonine; by MAPK). Lys209 is modified (N6-acetyllysine; alternate). Lys209 is subject to N6-succinyllysine; alternate.

The protein belongs to the peroxiredoxin family. Prx6 subfamily. In terms of assembly, homodimer. Interacts with GSTP1; mediates PRDX6 glutathionylation and regeneration. Interacts with APEX1. Interacts with STH. May interact with FAM168B. May interact with HTR2A. Irreversibly inactivated by overoxidation of Cys-47 to sulfinic acid (Cys-SO(2)H) and sulfonic acid (Cys-SO(3)H) forms upon oxidative stress. In terms of processing, phosphorylation at Thr-177 by MAP kinases increases the phospholipase activity of the enzyme. The phosphorylated form exhibits a greater lysophosphatidylcholine acyltransferase activity compared to the non-phosphorylated form.

It is found in the cytoplasm. The protein resides in the lysosome. The catalysed reaction is a hydroperoxide + 2 glutathione = an alcohol + glutathione disulfide + H2O. It carries out the reaction a 1,2-diacyl-sn-glycero-3-phosphocholine + H2O = a 1-acyl-sn-glycero-3-phosphocholine + a fatty acid + H(+). The enzyme catalyses a 1-acyl-sn-glycero-3-phosphocholine + an acyl-CoA = a 1,2-diacyl-sn-glycero-3-phosphocholine + CoA. It catalyses the reaction 1-hexadecanoyl-sn-glycero-3-phosphocholine + hexadecanoyl-CoA = 1,2-dihexadecanoyl-sn-glycero-3-phosphocholine + CoA. The catalysed reaction is 1,2-dihexadecanoyl-sn-glycero-3-phosphocholine + H2O = 1-hexadecanoyl-sn-glycero-3-phosphocholine + hexadecanoate + H(+). Its activity is regulated as follows. MJ33 or lithium;[(2R)-1-hexadecoxy-3-(2,2,2-trifluoroethoxy)propan-2-yl] methyl phosphate inhibits its phospholipase A2 activity. CI-976 or 2,2-Dimethyl-N-(2,4,6-trimethoxyphenyl)dodecanamide inhibits its lysophosphatidylcholine acyltransferase activity. Its function is as follows. Thiol-specific peroxidase that catalyzes the reduction of hydrogen peroxide and organic hydroperoxides to water and alcohols, respectively. Can reduce H(2)O(2) and short chain organic, fatty acid, and phospholipid hydroperoxides. Also has phospholipase activity, can therefore either reduce the oxidized sn-2 fatty acyl group of phospholipids (peroxidase activity) or hydrolyze the sn-2 ester bond of phospholipids (phospholipase activity). These activities are dependent on binding to phospholipids at acidic pH and to oxidized phospholipds at cytosolic pH. Plays a role in cell protection against oxidative stress by detoxifying peroxides and in phospholipid homeostasis. Exhibits acyl-CoA-dependent lysophospholipid acyltransferase which mediates the conversion of lysophosphatidylcholine (1-acyl-sn-glycero-3-phosphocholine or LPC) into phosphatidylcholine (1,2-diacyl-sn-glycero-3-phosphocholine or PC). Shows a clear preference for LPC as the lysophospholipid and for palmitoyl CoA as the fatty acyl substrate. The sequence is that of Peroxiredoxin-6 (PRDX6) from Homo sapiens (Human).